The following is a 214-amino-acid chain: Hypoxanthine-guanine phosphoribosyltransferase (214 aa).

Ala-2 is subject to N-acetylalanine. Lys-69 contributes to the GMP binding site. Lys-103 carries the post-translational modification N6-acetyllysine. A Glycyl lysine isopeptide (Lys-Gly) (interchain with G-Cter in SUMO1); alternate cross-link involves residue Lys-115. Residue Lys-115 forms a Glycyl lysine isopeptide (Lys-Gly) (interchain with G-Cter in SUMO2); alternate linkage. Residues 134 to 142 (EDIIDTGKT), Lys-166, 186 to 188 (KFV), and Asp-194 contribute to the GMP site. Asp-138 (proton acceptor) is an active-site residue. A Phosphothreonine modification is found at Thr-142. A Mg(2+)-binding site is contributed by Asp-194.

It belongs to the purine/pyrimidine phosphoribosyltransferase family. In terms of assembly, homotetramer. The cofactor is Mg(2+).

The protein localises to the cytoplasm. It carries out the reaction IMP + diphosphate = hypoxanthine + 5-phospho-alpha-D-ribose 1-diphosphate. The enzyme catalyses GMP + diphosphate = guanine + 5-phospho-alpha-D-ribose 1-diphosphate. It participates in purine metabolism; IMP biosynthesis via salvage pathway; IMP from hypoxanthine: step 1/1. Converts guanine to guanosine monophosphate, and hypoxanthine to inosine monophosphate. Transfers the 5-phosphoribosyl group from 5-phosphoribosylpyrophosphate onto the purine. Plays a central role in the generation of purine nucleotides through the purine salvage pathway. This chain is Hypoxanthine-guanine phosphoribosyltransferase (Hprt1), found in Mus spretus (Western Mediterranean mouse).